Consider the following 449-residue polypeptide: MSAPAQNYKIADISLAAFGRKEIELAEHEMPGLMAIRKAYGDVQPLKGARIAGCLHMTIQTAVLIETLVALGAEVTWSSCNIYSTQDHAAAAIAASGVPVFAWKGETEEEYLWCIEQQLFAFKDNKKLNLILDDGGDLTTLVHEKHPEMLEDCFGLSEETTTGVHHLYRMVKEGKLKVPAINVNDSVTKSKFDNLYGCRESLVDGIKRATDVMLAGKVAVVAGYGDVGKGCAAALRGMGARVLVTEIDPINALQAAMEGYQVVTMEDASHIGQVFVTTTGCRDIINGEHFINMPEDAIVCNIGHFDIEIDVAWLKANAKECINIKPQVDRYLLSSGRHVILLANGRLVNLGCATGHSSFVMSCSFSNQVLAQIALFKSNDKSFREKHIEFQKTGPFEVGVHVLPKILDEAVAKFHLGNLGVRLTKLSKVQSEYLGIPEEGPFKADHYRY.

N-acetylserine is present on S2. K21 participates in a covalent cross-link: Glycyl lysine isopeptide (Lys-Gly) (interchain with G-Cter in ubiquitin). Residues T58, D134, and E159 each coordinate substrate. 160–162 (TTT) provides a ligand contact to NAD(+). Residues K189 and D193 each coordinate substrate. NAD(+) is bound by residues N194, 223–228 (GYGDVG), E246, 302–304 (IGH), and N349. T393 carries the post-translational modification Phosphothreonine. Residue K413 forms a Glycyl lysine isopeptide (Lys-Gly) (interchain with G-Cter in ubiquitin) linkage.

Belongs to the adenosylhomocysteinase family. NAD(+) is required as a cofactor.

The catalysed reaction is S-adenosyl-L-homocysteine + H2O = L-homocysteine + adenosine. Its pathway is amino-acid biosynthesis; L-homocysteine biosynthesis; L-homocysteine from S-adenosyl-L-homocysteine: step 1/1. Functionally, adenosylhomocysteine is a competitive inhibitor of S-adenosyl-L-methionine-dependent methyl transferase reactions; therefore adenosylhomocysteinase may play a key role in the control of methylations via regulation of the intracellular concentration of adenosylhomocysteine. The chain is Adenosylhomocysteinase (SAH1) from Saccharomyces cerevisiae (strain ATCC 204508 / S288c) (Baker's yeast).